The sequence spans 273 residues: Light-independent protochlorophyllide reductase iron-sulfur ATP-binding protein (273 aa).

Residues 12 to 17 (GIGKST) and Lys41 contribute to the ATP site. Residue Ser16 coordinates Mg(2+). [4Fe-4S] cluster contacts are provided by Cys97 and Cys131. 182 to 183 (NR) provides a ligand contact to ATP.

This sequence belongs to the NifH/BchL/ChlL family. As to quaternary structure, homodimer. Protochlorophyllide reductase is composed of three subunits; BchL, BchN and BchB. The cofactor is [4Fe-4S] cluster.

It catalyses the reaction chlorophyllide a + oxidized 2[4Fe-4S]-[ferredoxin] + 2 ADP + 2 phosphate = protochlorophyllide a + reduced 2[4Fe-4S]-[ferredoxin] + 2 ATP + 2 H2O. It functions in the pathway porphyrin-containing compound metabolism; bacteriochlorophyll biosynthesis (light-independent). Its function is as follows. Component of the dark-operative protochlorophyllide reductase (DPOR) that uses Mg-ATP and reduced ferredoxin to reduce ring D of protochlorophyllide (Pchlide) to form chlorophyllide a (Chlide). This reaction is light-independent. The L component serves as a unique electron donor to the NB-component of the complex, and binds Mg-ATP. In Chloroflexus aggregans (strain MD-66 / DSM 9485), this protein is Light-independent protochlorophyllide reductase iron-sulfur ATP-binding protein.